The primary structure comprises 73 residues: U-scoloptoxin(03)-Ssd1b (73 aa).

The N-terminal stretch at 1–23 (MKSSMAVLLVMGLIIFTLDKCYS) is a signal peptide.

Post-translationally, contains 3 disulfide bonds. In terms of tissue distribution, expressed by the venom gland.

Its subcellular location is the secreted. The chain is U-scoloptoxin(03)-Ssd1b from Scolopendra dehaani (Thai centipede).